Consider the following 264-residue polypeptide: uncharacterized protein (264 aa).

Residues 9–29 traverse the membrane as a helical segment; that stretch reads LVISILSLIATLSISFNIYFI.

It is found in the membrane. This is an uncharacterized protein from Ureaplasma parvum serovar 3 (strain ATCC 700970).